The following is a 157-amino-acid chain: Nascent polypeptide-associated complex subunit beta (157 aa).

The interval 1-28 (MPVDPEKLAKLQKSSAKKVGGSRVKAKK) is disordered. An NAC-A/B domain is found at 33–98 (EQDDTKLIEA…PQEKNITQLI (66 aa)). Residues 124-157 (KTPKDFNTGSANAAADAGGEDIPDLVDQKFDDVE) form a disordered region.

The protein belongs to the NAC-beta family. As to quaternary structure, part of the nascent polypeptide-associated complex (NAC), consisting of EGD2 and EGD1. NAC associates with ribosomes via EGD1.

The protein localises to the cytoplasm. It localises to the nucleus. Component of the nascent polypeptide-associated complex (NAC), a dynamic component of the ribosomal exit tunnel, protecting the emerging polypeptides from interaction with other cytoplasmic proteins to ensure appropriate nascent protein targeting. The NAC complex also promotes mitochondrial protein import by enhancing productive ribosome interactions with the outer mitochondrial membrane and blocks the inappropriate interaction of ribosomes translating non-secretory nascent polypeptides with translocation sites in the membrane of the endoplasmic reticulum. EGD1 may act as a transcription factor that exert a negative effect on the expression of several genes that are transcribed by RNA polymerase II. The protein is Nascent polypeptide-associated complex subunit beta (EGD1) of Candida albicans (strain SC5314 / ATCC MYA-2876) (Yeast).